Here is a 123-residue protein sequence, read N- to C-terminus: Ig heavy chain V region HPCG13 (123 aa).

In terms of domain architecture, Ig-like spans 1–114; that stretch reads EVKLVESGGG…GSYWYFDVWG (114 aa).

The chain is Ig heavy chain V region HPCG13 from Mus musculus (Mouse).